The chain runs to 581 residues: Arginine--tRNA ligase (581 aa).

The 'HIGH' region motif lies at 131–141 (ANPTGPLHVGH).

Belongs to the class-I aminoacyl-tRNA synthetase family. Monomer.

It is found in the cytoplasm. It catalyses the reaction tRNA(Arg) + L-arginine + ATP = L-arginyl-tRNA(Arg) + AMP + diphosphate. The protein is Arginine--tRNA ligase of Nitrosospira multiformis (strain ATCC 25196 / NCIMB 11849 / C 71).